Reading from the N-terminus, the 206-residue chain is Ribonuclease HII (206 aa).

In terms of domain architecture, RNase H type-2 spans 19-206 (ALIAGVDEVG…GPVKRALGIE (188 aa)). The a divalent metal cation site is built by aspartate 25, glutamate 26, and aspartate 117.

Belongs to the RNase HII family. Mn(2+) serves as cofactor. It depends on Mg(2+) as a cofactor.

It localises to the cytoplasm. The catalysed reaction is Endonucleolytic cleavage to 5'-phosphomonoester.. In terms of biological role, endonuclease that specifically degrades the RNA of RNA-DNA hybrids. The protein is Ribonuclease HII of Vibrio cholerae serotype O1 (strain M66-2).